Here is a 337-residue protein sequence, read N- to C-terminus: Cytoskeleton protein RodZ (337 aa).

Over 1-111 (MNTEATHDQN…LGKRRKKRDG (111 aa)) the chain is Cytoplasmic. An HTH cro/C1-type domain is found at 19-71 (LRNAREQLGLSQQAVAERLCLKVSTVRDIEEDKAPADLASTFLRGYIRSYARL). Positions 30-49 (QQAVAERLCLKVSTVRDIEE) form a DNA-binding region, H-T-H motif. Residues 112 to 132 (WLMTFTWLVLFVVIGLSGAWW) form a helical; Signal-anchor for type II membrane protein membrane-spanning segment. Residues 133–337 (WQDRKAQQEE…TLNAEQSPAQ (205 aa)) lie on the Periplasmic side of the membrane. Positions 144–167 (TTMADQSSAELSSNSEQGQSVPLN) are enriched in polar residues. The disordered stretch occupies residues 144–235 (TTMADQSSAE…PTAATTPDGA (92 aa)). The segment covering 168 to 207 (TSTTTDPATTSTPPASVDTTATNTQTPAVTAPAPAVDPQQ) has biased composition (low complexity). Over residues 208–218 (NAVVSPSQANV) the composition is skewed to polar residues. Residues 219-235 (DTAATPAPTAATTPDGA) show a composition bias toward low complexity.

This sequence belongs to the RodZ family.

The protein resides in the cell inner membrane. In terms of biological role, cytoskeletal protein that is involved in cell-shape control through regulation of the length of the long axis. The protein is Cytoskeleton protein RodZ of Escherichia coli (strain K12 / MC4100 / BW2952).